A 505-amino-acid polypeptide reads, in one-letter code: tRNA (guanine(6)-N(2))-methyltransferase THUMP3 (505 aa).

Residues Lys-145–Ser-182 are disordered. A compositionally biased stretch (basic and acidic residues) spans Gly-156–Gly-173. Residues Lys-171–Leu-287 enclose the THUMP domain.

It belongs to the methyltransferase superfamily. Part of the heterodimeric THUMPD3-TRM112 methyltransferase complex; this complex forms an active tRNA methyltransferase, where TRMT112 acts as an activator of the catalytic subunit THUMPD3. Ubiquitously expressed. Abundantly expressed in the testis, also expressed in the brain, heart, kidney, liver, lung, muscle and spleen.

Its subcellular location is the cytoplasm. It carries out the reaction guanosine(6) in tRNA + S-adenosyl-L-methionine = N(2)-methylguanosine(6) in tRNA + S-adenosyl-L-homocysteine + H(+). It catalyses the reaction guanosine(7) in tRNA + S-adenosyl-L-methionine = N(2)-methylguanosine(7) in tRNA + S-adenosyl-L-homocysteine + H(+). Functionally, catalytic subunit of the THUMPD3-TRM112 methyltransferase complex, that specifically mediates the S-adenosyl-L-methionine-dependent N(2)-methylation of guanosine nucleotide at position 6 (m2G6) in tRNAs. This is one of the major tRNA (guanine-N(2))-methyltransferases. Also catalyzes the S-adenosyl-L-methionine-dependent N(2)-methylation of guanosine nucleotide at position 7 of tRNA(Trp). This Mus musculus (Mouse) protein is tRNA (guanine(6)-N(2))-methyltransferase THUMP3.